Consider the following 168-residue polypeptide: Variant surface antigen D (168 aa).

A signal peptide spans 1–29 (MKKSIFSKKLLVSFGSLVTLAAIPLIAIS). The N-palmitoyl cysteine moiety is linked to residue Cys-30. A lipid anchor (S-diacylglycerol cysteine) is attached at Cys-30. A disordered region spans residues 33 to 168 (TNTDQSQQPG…STSTSNMNTR (136 aa)). Low complexity-rich tracts occupy residues 35 to 44 (TDQSQQPGSG) and 52 to 71 (GTTT…ESGT). The span at 72–81 (TTGGQTGTTT) shows a compositional bias: gly residues. 7 tandem repeats follow at residues 81–92 (TGGQSDSTSTSK), 93–104 (EQGSSDSTSTSK), 105–116 (EQGSSDSTSTSK), 117–128 (EQGSSDSTSTSK), 129–140 (EQGSSDSTSTSK), 141–152 (EQGSSDSTSTSK), and 153–164 (EQGSSDSTSTSN). The segment at 81 to 164 (TGGQSDSTST…GSSDSTSTSN (84 aa)) is 7 X 12 AA tandem repeats. Residues 82-168 (GGQSDSTSTS…STSTSNMNTR (87 aa)) are compositionally biased toward low complexity.

It localises to the cell membrane. Functionally, responsible for the antigenic diversity for host adaptation. Expression in E.coli of a construct containing vlpD, vlpE, and vlpF yields antigenically distinguishable products corresponding to each gene. This chain is Variant surface antigen D (vlpD), found in Mesomycoplasma hyorhinis (Mycoplasma hyorhinis).